A 494-amino-acid chain; its full sequence is Anthranilate synthase component 1 (494 aa).

L-tryptophan contacts are provided by residues Ser52 and 274-276 (PYM). 309 to 310 (GT) contributes to the chorismate binding site. Residue Glu336 participates in Mg(2+) binding. Chorismate is bound by residues Tyr424, Arg444, 458–460 (GAG), and Gly460. Glu473 contacts Mg(2+).

It belongs to the anthranilate synthase component I family. As to quaternary structure, heterotetramer consisting of two non-identical subunits: a beta subunit (TrpG) and a large alpha subunit (TrpE). Mg(2+) is required as a cofactor.

The enzyme catalyses chorismate + L-glutamine = anthranilate + pyruvate + L-glutamate + H(+). Its pathway is amino-acid biosynthesis; L-tryptophan biosynthesis; L-tryptophan from chorismate: step 1/5. With respect to regulation, feedback inhibited by tryptophan. Part of a heterotetrameric complex that catalyzes the two-step biosynthesis of anthranilate, an intermediate in the biosynthesis of L-tryptophan. In the first step, the glutamine-binding beta subunit (TrpG) of anthranilate synthase (AS) provides the glutamine amidotransferase activity which generates ammonia as a substrate that, along with chorismate, is used in the second step, catalyzed by the large alpha subunit of AS (TrpE) to produce anthranilate. In the absence of TrpG, TrpE can synthesize anthranilate directly from chorismate and high concentrations of ammonia. This Aquifex aeolicus (strain VF5) protein is Anthranilate synthase component 1 (trpE).